We begin with the raw amino-acid sequence, 170 residues long: Adenine phosphoribosyltransferase (170 aa).

This sequence belongs to the purine/pyrimidine phosphoribosyltransferase family. Homodimer.

It localises to the cytoplasm. The enzyme catalyses AMP + diphosphate = 5-phospho-alpha-D-ribose 1-diphosphate + adenine. It functions in the pathway purine metabolism; AMP biosynthesis via salvage pathway; AMP from adenine: step 1/1. Functionally, catalyzes a salvage reaction resulting in the formation of AMP, that is energically less costly than de novo synthesis. The polypeptide is Adenine phosphoribosyltransferase (Fusobacterium nucleatum subsp. nucleatum (strain ATCC 25586 / DSM 15643 / BCRC 10681 / CIP 101130 / JCM 8532 / KCTC 2640 / LMG 13131 / VPI 4355)).